The following is a 516-amino-acid chain: Maintenance of mitochondrial morphology protein 1 (516 aa).

Topologically, residues 1 to 43 are lumenal; the sequence is MAGSTSASLQTPYFPSSTQINPVRVDHTLPLPPAQPSLSFTQG. A helical transmembrane segment spans residues 44 to 64; it reads LLVGQLSVVLLIGAFIKFFIF. Residues 65–516 lie on the Cytoplasmic side of the membrane; the sequence is GEAPPPPSRG…GSMPDTVTET (452 aa). Disordered regions lie at residues 70–118, 295–349, 420–466, and 485–516; these read PPSR…SSST, TSDQ…SKHG, RTGL…IDRG, and GGHQ…VTET. 3 stretches are compositionally biased toward polar residues: residues 74–96, 105–118, and 295–312; these read GLSN…TDSS, STSN…SSST, and TSDQ…TTSE. The SMP-LTD domain occupies 151–412; sequence QPESLDWFNV…EPRVQVVGLP (262 aa). The segment covering 449–460 has biased composition (gly residues); sequence GVSGGGGGGGSM.

Belongs to the MMM1 family. Homodimer. Component of the ER-mitochondria encounter structure (ERMES) or MDM complex, composed of MMM1, MDM10, MDM12 and MDM34. An MMM1 homodimer associates with one molecule of MDM12 on each side in a pairwise head-to-tail manner, and the SMP-LTD domains of MMM1 and MDM12 generate a continuous hydrophobic tunnel for phospholipid trafficking.

It is found in the endoplasmic reticulum membrane. In terms of biological role, component of the ERMES/MDM complex, which serves as a molecular tether to connect the endoplasmic reticulum (ER) and mitochondria. Components of this complex are involved in the control of mitochondrial shape and protein biogenesis, and function in nonvesicular lipid trafficking between the ER and mitochondria. The MDM12-MMM1 subcomplex functions in the major beta-barrel assembly pathway that is responsible for biogenesis of all outer membrane beta-barrel proteins, and acts in a late step after the SAM complex. The MDM10-MDM12-MMM1 subcomplex further acts in the TOM40-specific pathway after the action of the MDM12-MMM1 complex. Essential for establishing and maintaining the structure of mitochondria and maintenance of mtDNA nucleoids. This Paracoccidioides brasiliensis (strain Pb18) protein is Maintenance of mitochondrial morphology protein 1.